A 90-amino-acid polypeptide reads, in one-letter code: Putative beta-neurotoxin RjAa2f (90 aa).

An N-terminal signal peptide occupies residues 1-18; the sequence is MKILIFIIASFMLIGVEC. In terms of domain architecture, LCN-type CS-alpha/beta spans 19–89; the sequence is KEGYPMGSDG…VWDSKTNKCG (71 aa). 4 cysteine pairs are disulfide-bonded: C29/C88, C33/C62, C40/C69, and C44/C71.

This sequence belongs to the long (4 C-C) scorpion toxin superfamily. Sodium channel inhibitor family. Beta subfamily. As to expression, expressed by the venom gland.

The protein localises to the secreted. Beta toxins bind voltage-independently at site-4 of sodium channels (Nav) and shift the voltage of activation toward more negative potentials thereby affecting sodium channel activation and promoting spontaneous and repetitive firing. The polypeptide is Putative beta-neurotoxin RjAa2f (Rhopalurus junceus (Caribbean blue scorpion)).